The primary structure comprises 280 residues: 3-deoxy-manno-octulosonate cytidylyltransferase (280 aa).

Belongs to the KdsB family.

The protein resides in the cytoplasm. It carries out the reaction 3-deoxy-alpha-D-manno-oct-2-ulosonate + CTP = CMP-3-deoxy-beta-D-manno-octulosonate + diphosphate. It participates in nucleotide-sugar biosynthesis; CMP-3-deoxy-D-manno-octulosonate biosynthesis; CMP-3-deoxy-D-manno-octulosonate from 3-deoxy-D-manno-octulosonate and CTP: step 1/1. It functions in the pathway bacterial outer membrane biogenesis; lipopolysaccharide biosynthesis. Functionally, activates KDO (a required 8-carbon sugar) for incorporation into bacterial lipopolysaccharide in Gram-negative bacteria. The sequence is that of 3-deoxy-manno-octulosonate cytidylyltransferase from Colwellia psychrerythraea (strain 34H / ATCC BAA-681) (Vibrio psychroerythus).